The sequence spans 529 residues: Peptide chain release factor 3 (529 aa).

In terms of domain architecture, tr-type G spans 11-280; the sequence is SKRRTFAIIS…GLVAWAPAPM (270 aa). Residues 20-27, 88-92, and 142-145 contribute to the GTP site; these read SHPDAGKT, DTPGH, and NKLD.

Belongs to the TRAFAC class translation factor GTPase superfamily. Classic translation factor GTPase family. PrfC subfamily.

Its subcellular location is the cytoplasm. Functionally, increases the formation of ribosomal termination complexes and stimulates activities of RF-1 and RF-2. It binds guanine nucleotides and has strong preference for UGA stop codons. It may interact directly with the ribosome. The stimulation of RF-1 and RF-2 is significantly reduced by GTP and GDP, but not by GMP. The polypeptide is Peptide chain release factor 3 (Pectobacterium carotovorum subsp. carotovorum (strain PC1)).